Here is a 396-residue protein sequence, read N- to C-terminus: Dual specificity mitogen-activated protein kinase kinase dSOR1 (396 aa).

Residues 25-44 (APTPPFKTPSGTDTHSLLGK) form a disordered region. Residues 87 to 364 (LEKLGELGSG…LKTLLSHPWI (278 aa)) form the Protein kinase domain. ATP contacts are provided by residues 93–101 (LGSGNGGVV) and Lys-116. The Proton acceptor role is filled by Asp-209. A phosphoserine; by RAF mark is found at Ser-237 and Ser-241.

It belongs to the protein kinase superfamily. STE Ser/Thr protein kinase family. MAP kinase kinase subfamily. As to quaternary structure, interacts with Raf and ksr; Dsor1 binding to ksr probably promotes ksr and Raf dimerization and ksr-mediated Raf transactivation. Phosphorylation on Ser/Thr by MAP kinase kinase kinases regulates positively the kinase activity.

It carries out the reaction L-seryl-[protein] + ATP = O-phospho-L-seryl-[protein] + ADP + H(+). The enzyme catalyses L-threonyl-[protein] + ATP = O-phospho-L-threonyl-[protein] + ADP + H(+). The catalysed reaction is L-tyrosyl-[protein] + ATP = O-phospho-L-tyrosyl-[protein] + ADP + H(+). Its function is as follows. Required downstream of Raf in the sevenless (sev), torso (tor), and Drosophila EGF receptor homolog (DER) signal transduction pathways. Involved in both positive regulation (at the posterior terminus) and negative regulation (at the anterior domain) of tll, as in other terminal class gene products, maybe via the ERK-A kinase. The protein is Dual specificity mitogen-activated protein kinase kinase dSOR1 (Dsor1) of Drosophila melanogaster (Fruit fly).